The primary structure comprises 77 residues: MKLIIFTGLVLFAIVSLIEVQADNERACLPQYQVCTDAPGNCCSNLVCNCYGRYKSGARIGRNCFCLQKGVIYKREN.

An N-terminal signal peptide occupies residues 1 to 20; that stretch reads MKLIIFTGLVLFAIVSLIEV. Residues 21–26 constitute a propeptide that is removed on maturation; the sequence is QADNER.

This sequence belongs to the neurotoxin 19 (CSTX) family. 08 (U8-Lctx) subfamily. Post-translationally, contains 4 disulfide bonds. In terms of tissue distribution, expressed by the venom gland.

The protein localises to the secreted. This Lycosa singoriensis (Wolf spider) protein is U8-lycotoxin-Ls1g.